A 396-amino-acid chain; its full sequence is Elongation factor Tu 1 (396 aa).

The tr-type G domain occupies 10 to 206 (KPHCNIGTIG…AVDAYIPQPE (197 aa)). The segment at 19–26 (GHVDHGKT) is G1. 19–26 (GHVDHGKT) is a binding site for GTP. Threonine 26 lines the Mg(2+) pocket. Residues 60-64 (GITIS) form a G2 region. Residues 81-84 (DCPG) are G3. GTP is bound by residues 81 to 85 (DCPGH) and 136 to 139 (NKCD). The tract at residues 136–139 (NKCD) is G4. Residues 174–176 (SAL) are G5.

Belongs to the TRAFAC class translation factor GTPase superfamily. Classic translation factor GTPase family. EF-Tu/EF-1A subfamily. As to quaternary structure, monomer.

It is found in the cytoplasm. The catalysed reaction is GTP + H2O = GDP + phosphate + H(+). Its function is as follows. GTP hydrolase that promotes the GTP-dependent binding of aminoacyl-tRNA to the A-site of ribosomes during protein biosynthesis. In Rhodopseudomonas palustris (strain BisB5), this protein is Elongation factor Tu 1.